A 486-amino-acid polypeptide reads, in one-letter code: Galactose-1-phosphate uridylyltransferase (486 aa).

Belongs to the galactose-1-phosphate uridylyltransferase type 2 family.

Its subcellular location is the cytoplasm. It carries out the reaction alpha-D-galactose 1-phosphate + UDP-alpha-D-glucose = alpha-D-glucose 1-phosphate + UDP-alpha-D-galactose. Its pathway is carbohydrate metabolism; galactose metabolism. In Lacticaseibacillus casei (strain BL23) (Lactobacillus casei), this protein is Galactose-1-phosphate uridylyltransferase.